The following is a 90-amino-acid chain: Translation initiation factor IF-1 (90 aa).

Residues 7–76 (KEDVIRMEGT…TRGRIVYRKK (70 aa)) form the S1-like domain.

Belongs to the IF-1 family. As to quaternary structure, component of the 30S ribosomal translation pre-initiation complex which assembles on the 30S ribosome in the order IF-2 and IF-3, IF-1 and N-formylmethionyl-tRNA(fMet); mRNA recruitment can occur at any time during PIC assembly.

The protein resides in the cytoplasm. One of the essential components for the initiation of protein synthesis. Stabilizes the binding of IF-2 and IF-3 on the 30S subunit to which N-formylmethionyl-tRNA(fMet) subsequently binds. Helps modulate mRNA selection, yielding the 30S pre-initiation complex (PIC). Upon addition of the 50S ribosomal subunit IF-1, IF-2 and IF-3 are released leaving the mature 70S translation initiation complex. In Fervidobacterium nodosum (strain ATCC 35602 / DSM 5306 / Rt17-B1), this protein is Translation initiation factor IF-1.